A 296-amino-acid chain; its full sequence is Probable endonuclease 4 (296 aa).

Zn(2+)-binding residues include histidine 68, histidine 109, glutamate 144, aspartate 178, histidine 181, histidine 213, aspartate 226, histidine 228, and glutamate 258.

Belongs to the AP endonuclease 2 family. Requires Zn(2+) as cofactor.

The enzyme catalyses Endonucleolytic cleavage to 5'-phosphooligonucleotide end-products.. Endonuclease IV plays a role in DNA repair. It cleaves phosphodiester bonds at apurinic or apyrimidinic (AP) sites, generating a 3'-hydroxyl group and a 5'-terminal sugar phosphate. In Staphylococcus aureus (strain MRSA252), this protein is Probable endonuclease 4.